The chain runs to 433 residues: Probable RNA 3'-terminal phosphate cyclase (433 aa).

Over residues 1 to 10 (MGKNKNYNKN) the composition is skewed to low complexity. The tract at residues 1–28 (MGKNKNYNKNQFKKSKTNNDTTVAQQQQ) is disordered. A compositionally biased stretch (polar residues) spans 18–28 (NNDTTVAQQQQ). ATP-binding positions include Q137 and 328–332 (YLQDQ). H354 (tele-AMP-histidine intermediate) is an active-site residue. Residues 400–433 (LNNNNNNSNSNTTTTTTTTTISTTTIDNQNSEEK) are disordered. A compositionally biased stretch (low complexity) spans 401-425 (NNNNNNSNSNTTTTTTTTTISTTTI).

It belongs to the RNA 3'-terminal cyclase family. Type 1 subfamily.

The protein localises to the nucleus. The protein resides in the nucleoplasm. The enzyme catalyses a 3'-end 3'-phospho-ribonucleotide-RNA + ATP = a 3'-end 2',3'-cyclophospho-ribonucleotide-RNA + AMP + diphosphate. In terms of biological role, catalyzes the conversion of 3'-phosphate to a 2',3'-cyclic phosphodiester at the end of RNA. The mechanism of action of the enzyme occurs in 3 steps: (A) adenylation of the enzyme by ATP; (B) transfer of adenylate to an RNA-N3'P to produce RNA-N3'PP5'A; (C) and attack of the adjacent 2'-hydroxyl on the 3'-phosphorus in the diester linkage to produce the cyclic end product. The biological role of this enzyme is unknown but it is likely to function in some aspects of cellular RNA processing. This Dictyostelium discoideum (Social amoeba) protein is Probable RNA 3'-terminal phosphate cyclase (rtca).